A 157-amino-acid chain; its full sequence is Small ribosomal subunit protein bS16 (157 aa).

Residues N114 to E157 form a disordered region.

This sequence belongs to the bacterial ribosomal protein bS16 family.

The chain is Small ribosomal subunit protein bS16 from Corynebacterium diphtheriae (strain ATCC 700971 / NCTC 13129 / Biotype gravis).